The sequence spans 308 residues: Elongation factor Ts (308 aa).

An involved in Mg(2+) ion dislocation from EF-Tu region spans residues 80 to 83 (TDFV).

It belongs to the EF-Ts family.

Its subcellular location is the cytoplasm. In terms of biological role, associates with the EF-Tu.GDP complex and induces the exchange of GDP to GTP. It remains bound to the aminoacyl-tRNA.EF-Tu.GTP complex up to the GTP hydrolysis stage on the ribosome. The polypeptide is Elongation factor Ts (Parvibaculum lavamentivorans (strain DS-1 / DSM 13023 / NCIMB 13966)).